The sequence spans 520 residues: D-aminopeptidase (520 aa).

Ser62 (nucleophile) is an active-site residue. Catalysis depends on Lys65, which acts as the Proton donor/acceptor. The important for specificity stretch occupies residues 477–487 (QRSMDAPSPGE). Asp481 contributes to the substrate binding site.

This sequence belongs to the peptidase S12 family. As to quaternary structure, homodimer.

It carries out the reaction Release of an N-terminal D-amino acid from a peptide, Xaa-|-Yaa-, in which Xaa is preferably D-Ala, D-Ser or D-Thr. D-amino acid amides and methyl esters also are hydrolyzed, as is glycine amide.. With respect to regulation, inhibited by beta-lactam compounds such as 6-aminopenicillic acid, 7-aminocephalosporanic acid, benzylpenicillin and ampicillin. Inhibited by p-chloromercuribenzoate. In terms of biological role, hydrolyzes N-terminal residues in D-amino acid-containing peptides. This Brucella anthropi (Ochrobactrum anthropi) protein is D-aminopeptidase (dap).